The following is a 193-amino-acid chain: Interferon epsilon (193 aa).

The first 21 residues, 1-21, serve as a signal peptide directing secretion; that stretch reads MINKSFFEIMLVLLASSTGFS. The cysteines at positions 53 and 163 are disulfide-linked. A glycan (N-linked (GlcNAc...) asparagine) is linked at Asn139.

This sequence belongs to the alpha/beta interferon family.

The protein localises to the secreted. In terms of biological role, type I interferon required for maintaining basal levels of IFN-regulated genes, including 2'-5'-oligoadenylate synthetase, IRF7 and ISG15, in the female reproductive tract. Directly mediates protection against viral and bacterial genital infections. The sequence is that of Interferon epsilon (IFNE) from Sus scrofa (Pig).